Reading from the N-terminus, the 354-residue chain is Serum paraoxonase/arylesterase 2 (354 aa).

A disulfide bridge links C42 with C352. Ca(2+) contacts are provided by D53 and D54. Catalysis depends on H114, which acts as the Proton acceptor. The Ca(2+) site is built by I116, N167, D168, and N223. N254 carries N-linked (GlcNAc...) asparagine glycosylation. 2 residues coordinate Ca(2+): D268 and N269. N269 and N323 each carry an N-linked (GlcNAc...) asparagine glycan.

It belongs to the paraoxonase family. As to quaternary structure, homotrimer. The cofactor is Ca(2+). In terms of processing, glycosylated. Post-translationally, the signal sequence is not cleaved.

It localises to the membrane. The enzyme catalyses a phenyl acetate + H2O = a phenol + acetate + H(+). The catalysed reaction is an N-acyl-L-homoserine lactone + H2O = an N-acyl-L-homoserine + H(+). In terms of biological role, capable of hydrolyzing lactones and a number of aromatic carboxylic acid esters. The sequence is that of Serum paraoxonase/arylesterase 2 (PON2) from Canis lupus familiaris (Dog).